A 279-amino-acid chain; its full sequence is DegV domain-containing protein lin1977 (279 aa).

Residues 4–278 form the DegV domain; that stretch reads IKIITDSTAG…TGAFAFMYYT (275 aa). Ser62 and Ser94 together coordinate hexadecanoate.

May bind long-chain fatty acids, such as palmitate, and may play a role in lipid transport or fatty acid metabolism. This is DegV domain-containing protein lin1977 from Listeria innocua serovar 6a (strain ATCC BAA-680 / CLIP 11262).